The chain runs to 345 residues: Protein TRIGALACTOSYLDIACYLGLYCEROL 3, chloroplastic (345 aa).

The transit peptide at 1–46 directs the protein to the chloroplast; sequence MLSLSCSSSSSSLLPPSLHYHGSSSVQSIVVPRRSLISFRRKVSCC. The ABC transporter domain maps to 85–336; sequence IECRDVYKSF…TNPIVQQFAT (252 aa). Residue 117–124 coordinates ATP; sequence GPSGTGKS.

It belongs to the ABC transporter superfamily. ABCI family. Catalytic subunit of the TGD complex, a lipid translocator at the inner chloroplast envelope membrane made of TGD1, TGD2 and TGD3. Interacts with TGD1 and TGD2 with an overall subunit stoichiometry of 2 TGD1, 2 TGD3 and 8 to 12 TGD2. Interacts with TGD5.

Its subcellular location is the plastid. It localises to the chloroplast stroma. In terms of biological role, ATPase transporter involved in lipid transfer from the endoplasmic reticulum (ER) to plastids, and necessary for thylakoids formation. Not involved in transition metal transport pathways. The polypeptide is Protein TRIGALACTOSYLDIACYLGLYCEROL 3, chloroplastic (Arabidopsis thaliana (Mouse-ear cress)).